The sequence spans 292 residues: UPF0696 protein C11orf68 homolog (292 aa).

The span at Met1–Gly10 shows a compositional bias: low complexity. Positions Met1–Gly60 are disordered. Gly residues predominate over residues Ala11 to Asp20. Residues Glu35–Pro44 are compositionally biased toward basic and acidic residues.

This sequence belongs to the UPF0696 family.

This Rattus norvegicus (Rat) protein is UPF0696 protein C11orf68 homolog (Bles03).